The chain runs to 374 residues: Coiled-coil domain-containing protein 89 (374 aa).

The segment at Met1 to Glu38 is disordered. Residue Thr16 is modified to Phosphothreonine. The span at Pro19–Asn32 shows a compositional bias: basic and acidic residues. Residues Pro19–Ala350 are a coiled coil.

Belongs to the CCDC89 family. In terms of assembly, interacts with HEY1.

It localises to the cytoplasm. Its subcellular location is the nucleus. This Macaca fascicularis (Crab-eating macaque) protein is Coiled-coil domain-containing protein 89 (CCDC89).